Reading from the N-terminus, the 227-residue chain is Riboflavin kinase (227 aa).

Residues 1 to 92 are H-T-H motif-like; sequence MSKDYEVFPL…LKRTIDSSTF (92 aa). A riboflavin kinase region spans residues 93 to 227; sequence LTLRGYVVPG…GDKVEVVIPV (135 aa). 102-107 is a CDP binding site; that stretch reads GLGEGA. Positions 131 and 133 each coordinate Mg(2+). FMN-binding residues include T194 and E202. 207–210 serves as a coordination point for CDP; that stretch reads VRLR.

This sequence belongs to the archaeal riboflavin kinase family. Mg(2+) serves as cofactor.

The enzyme catalyses riboflavin + CTP = CDP + FMN + H(+). Its pathway is cofactor biosynthesis; FMN biosynthesis; FMN from riboflavin (CTP route): step 1/1. Functionally, catalyzes the CTP-dependent phosphorylation of riboflavin (vitamin B2) to form flavin mononucleotide (FMN). This Thermofilum pendens (strain DSM 2475 / Hrk 5) protein is Riboflavin kinase (ribK).